A 116-amino-acid polypeptide reads, in one-letter code: Ribosome-binding factor A (116 aa).

It belongs to the RbfA family. As to quaternary structure, monomer. Binds 30S ribosomal subunits, but not 50S ribosomal subunits or 70S ribosomes.

The protein localises to the cytoplasm. Functionally, one of several proteins that assist in the late maturation steps of the functional core of the 30S ribosomal subunit. Associates with free 30S ribosomal subunits (but not with 30S subunits that are part of 70S ribosomes or polysomes). Required for efficient processing of 16S rRNA. May interact with the 5'-terminal helix region of 16S rRNA. The polypeptide is Ribosome-binding factor A (Streptococcus uberis (strain ATCC BAA-854 / 0140J)).